Consider the following 201-residue polypeptide: Kunitz type trypsin inhibitor 104 (201 aa).

An N-terminal signal peptide occupies residues 1 to 24 (MSTRSLTIFILAHVWLLMATTSIA). 3 cysteine pairs are disulfide-bonded: Cys63–Cys110, Cys161–Cys173, and Cys166–Cys169.

The protein belongs to the protease inhibitor I3 (leguminous Kunitz-type inhibitor) family. In terms of assembly, interacts with CP.

It is found in the secreted. It localises to the extracellular space. The protein localises to the apoplast. Functionally, protease inhibitor involved in the control of mycorrhiza establishment and arbuscule development during root colonization by arbuscular mycorrhizal (AM) fungi (e.g. Rhizophagus irregularis). The sequence is that of Kunitz type trypsin inhibitor 104 from Medicago truncatula (Barrel medic).